The chain runs to 243 residues: UPF0246 protein Spy49_1742 (243 aa).

Belongs to the UPF0246 family.

This Streptococcus pyogenes serotype M49 (strain NZ131) protein is UPF0246 protein Spy49_1742.